Here is a 341-residue protein sequence, read N- to C-terminus: Peptidoglycan recognition protein 3 (341 aa).

Residues 1 to 17 (MGTLPWLLAFFILGLQA) form the signal peptide. N-acetylmuramoyl-L-alanine amidase domains follow at residues 77 to 179 (TIGW…KVCP) and 200 to 325 (PAKY…ILSP). Asparagine 113 is a glycosylation site (N-linked (GlcNAc...) asparagine). Intrachain disulfides connect cysteine 178/cysteine 300, cysteine 194/cysteine 238, and cysteine 214/cysteine 220. Histidine 231, arginine 235, and tyrosine 242 together coordinate peptidoglycan. Residues 264-269 (HTYGFN) are interaction with murein.

It belongs to the N-acetylmuramoyl-L-alanine amidase 2 family. As to quaternary structure, monomer. Homodimer; disulfide-linked. Heterodimer with PGLYRP4; disulfide-linked. In terms of processing, N-glycosylated. As to expression, detected in skin epidermis, eccrine sweat glands and ducts, ciliary body epithelial cells of the eye, in small intestine, colon, stomach and in mature epithelial cells of the tongue (at protein level). Highly expressed in skin and esophagus, expressed also in tonsils and thymus and to a much lesser extent in the stomach, descending colon, rectum and brain.

Its subcellular location is the secreted. Pattern receptor that binds to murein peptidoglycans (PGN) of Gram-positive bacteria. Has bactericidal activity towards Gram-positive bacteria. May kill Gram-positive bacteria by interfering with peptidoglycan biosynthesis. Also binds to Gram-negative bacteria, and has bacteriostatic activity towards Gram-negative bacteria. Plays a role in innate immunity. The polypeptide is Peptidoglycan recognition protein 3 (PGLYRP3) (Homo sapiens (Human)).